The following is a 304-amino-acid chain: Ribosomal RNA small subunit methyltransferase H (304 aa).

S-adenosyl-L-methionine-binding positions include 47–49 (GGH), aspartate 66, phenylalanine 93, aspartate 108, and glutamine 115.

It belongs to the methyltransferase superfamily. RsmH family.

The protein resides in the cytoplasm. The enzyme catalyses cytidine(1402) in 16S rRNA + S-adenosyl-L-methionine = N(4)-methylcytidine(1402) in 16S rRNA + S-adenosyl-L-homocysteine + H(+). In terms of biological role, specifically methylates the N4 position of cytidine in position 1402 (C1402) of 16S rRNA. This Prochlorococcus marinus (strain NATL1A) protein is Ribosomal RNA small subunit methyltransferase H.